The chain runs to 296 residues: Probable transcription factor At1g44810 (296 aa).

Residues 1-119 (MNKKLLNPLE…AKKVSGDDDN (119 aa)) form a disordered region. The span at 19 to 28 (EDVDEEISSG) shows a compositional bias: acidic residues. A compositionally biased stretch (polar residues) spans 52–72 (TQTLNSPSTEAPTLDSGSETN). Residues 97–119 (RASEGTSSKDIKRAKKVSGDDDN) show a composition bias toward basic and acidic residues.

Belongs to the GeBP family.

The protein is Probable transcription factor At1g44810 of Arabidopsis thaliana (Mouse-ear cress).